The sequence spans 431 residues: Ribonuclease TTHA0252 (431 aa).

Residues H59, H61, D63, H64, H141, D162, and H400 each coordinate Zn(2+).

This sequence belongs to the metallo-beta-lactamase superfamily. RNA-metabolizing metallo-beta-lactamase-like family. In terms of assembly, monomer. Zn(2+) serves as cofactor.

It is found in the cytoplasm. Its activity is regulated as follows. Inhibited by cadmium, cobalt, manganese, magnesium, calcium and nickel ions. Its function is as follows. Has endoribonuclease activity towards 23S and 16S rRNA (in vitro). The protein is Ribonuclease TTHA0252 of Thermus thermophilus (strain ATCC 27634 / DSM 579 / HB8).